Reading from the N-terminus, the 88-residue chain is Molybdopterin synthase sulfur carrier subunit (88 aa).

1-thioglycine; alternate is present on glycine 88. Residue glycine 88 is modified to Glycyl adenylate; alternate.

It belongs to the MoaD family. MOCS2A subfamily. As to quaternary structure, heterotetramer; composed of 2 small (MOCS2A) and 2 large (MOCS2B) subunits. C-terminal thiocarboxylation occurs in 2 steps, it is first acyl-adenylated (-COAMP) via the hesA/moeB/thiF part of MOCS3, then thiocarboxylated (-COSH) via the rhodanese domain of MOCS3. In terms of tissue distribution, widely expressed. Highest levels are found in heart and skeletal muscle. Lower levels are present in brain, kidney and pancreas. Very low levels are found in lung and peripheral blood leukocytes.

It localises to the cytoplasm. It is found in the cytosol. It functions in the pathway cofactor biosynthesis; molybdopterin biosynthesis. Functionally, acts as a sulfur carrier required for molybdopterin biosynthesis. Component of the molybdopterin synthase complex that catalyzes the conversion of precursor Z into molybdopterin by mediating the incorporation of 2 sulfur atoms into precursor Z to generate a dithiolene group. In the complex, serves as sulfur donor by being thiocarboxylated (-COSH) at its C-terminus by MOCS3. After interaction with MOCS2B, the sulfur is then transferred to precursor Z to form molybdopterin. The sequence is that of Molybdopterin synthase sulfur carrier subunit from Homo sapiens (Human).